The primary structure comprises 68 residues: Lipopolysaccharide export system ATP-binding protein LptB (68 aa).

This sequence belongs to the ABC transporter superfamily. Outer membrane lipopolysaccharide export (TC 1.B.42) family. In terms of assembly, component of the lipopolysaccharide transport and assembly complex. The LptBFG transporter is composed of two ATP-binding proteins (LptB) and two transmembrane proteins (LptF and LptG).

The protein localises to the cytoplasm. It localises to the cell inner membrane. Part of the ABC transporter complex LptBFG involved in the translocation of lipopolysaccharide (LPS) from the inner membrane to the outer membrane. Probably responsible for energy coupling to the transport system. In Klebsiella oxytoca, this protein is Lipopolysaccharide export system ATP-binding protein LptB (lptB).